The primary structure comprises 196 residues: Nodulation protein A (196 aa).

It belongs to the NodA family.

It localises to the cytoplasm. Functionally, N-acyltransferase required for nodulation. Acts in the production of a small, heat-stable compound (Nod) that stimulates mitosis in various plant protoplasts. The sequence is that of Nodulation protein A from Mesorhizobium sp. (strain 7653R).